A 475-amino-acid polypeptide reads, in one-letter code: UDP-N-acetylmuramate--L-alanine ligase (475 aa).

Position 119-125 (119-125 (GTHGKTT)) interacts with ATP.

The protein belongs to the MurCDEF family.

It localises to the cytoplasm. The catalysed reaction is UDP-N-acetyl-alpha-D-muramate + L-alanine + ATP = UDP-N-acetyl-alpha-D-muramoyl-L-alanine + ADP + phosphate + H(+). The protein operates within cell wall biogenesis; peptidoglycan biosynthesis. In terms of biological role, cell wall formation. This chain is UDP-N-acetylmuramate--L-alanine ligase, found in Wigglesworthia glossinidia brevipalpis.